The primary structure comprises 153 residues: Aspartate carbamoyltransferase regulatory chain (153 aa).

C109, C114, C138, and C141 together coordinate Zn(2+).

This sequence belongs to the PyrI family. In terms of assembly, contains catalytic and regulatory chains. Zn(2+) serves as cofactor.

In terms of biological role, involved in allosteric regulation of aspartate carbamoyltransferase. In Klebsiella pneumoniae subsp. pneumoniae (strain ATCC 700721 / MGH 78578), this protein is Aspartate carbamoyltransferase regulatory chain.